The following is a 220-amino-acid chain: Deoxyribose-phosphate aldolase 1 (220 aa).

Asp-89 (proton donor/acceptor) is an active-site residue. The active-site Schiff-base intermediate with acetaldehyde is the Lys-151. Residue Lys-180 is the Proton donor/acceptor of the active site.

Belongs to the DeoC/FbaB aldolase family. DeoC type 1 subfamily.

Its subcellular location is the cytoplasm. It catalyses the reaction 2-deoxy-D-ribose 5-phosphate = D-glyceraldehyde 3-phosphate + acetaldehyde. It functions in the pathway carbohydrate degradation; 2-deoxy-D-ribose 1-phosphate degradation; D-glyceraldehyde 3-phosphate and acetaldehyde from 2-deoxy-alpha-D-ribose 1-phosphate: step 2/2. Functionally, catalyzes a reversible aldol reaction between acetaldehyde and D-glyceraldehyde 3-phosphate to generate 2-deoxy-D-ribose 5-phosphate. This is Deoxyribose-phosphate aldolase 1 from Mesoplasma florum (strain ATCC 33453 / NBRC 100688 / NCTC 11704 / L1) (Acholeplasma florum).